A 177-amino-acid chain; its full sequence is MLWRLVQQWSVAVFLLSYSVPSCGRSVEELGRRLKRAVSEHQLLHDKGKSIQDLRRRFFLHHLIAEIHTAEIRATSEVSPNSKPAPNTKNHPVRFGSDDEGKYLTQETNKVETYKEQPLKTPGKKKKSKPGKRKEQEKKKRRTRSAWLTSYVAGTGLEEDYLSDISATSLELNSRRH.

Positions 1–24 (MLWRLVQQWSVAVFLLSYSVPSCG) are cleaved as a signal peptide. Residues 25 to 34 (RSVEELGRRL) constitute a propeptide that is removed on maturation. The interval 57–68 (RFFLHHLIAEIH) is important for receptor binding. The interval 74–149 (ATSEVSPNSK…KRRTRSAWLT (76 aa)) is disordered. Positions 76–90 (SEVSPNSKPAPNTKN) are enriched in polar residues. Positions 108–129 (TNKVETYKEQPLKTPGKKKKSK) match the Nuclear localization signal motif. Residues 109 to 118 (NKVETYKEQP) are compositionally biased toward basic and acidic residues. Positions 122–132 (PGKKKKSKPGK) are enriched in basic residues.

It belongs to the parathyroid hormone family. In terms of assembly, PTHrP interacts with PTH1R (via N-terminal extracellular domain). Post-translationally, there are several secretory forms, including osteostatin, arising from endoproteolytic cleavage of the initial translation product. Each of these secretory forms is believed to have one or more of its own receptors that mediates the normal paracrine, autocrine and endocrine actions.

Its subcellular location is the secreted. The protein localises to the cytoplasm. It localises to the nucleus. Its function is as follows. Neuroendocrine peptide which is a critical regulator of cellular and organ growth, development, migration, differentiation and survival and of epithelial calcium ion transport. Acts by binding to its receptor, PTH1R, activating G protein-coupled receptor signaling. Regulates endochondral bone development and epithelial-mesenchymal interactions during the formation of the mammary glands and teeth. Required for skeletal homeostasis. Promotes mammary mesenchyme differentiation and bud outgrowth by modulating mesenchymal cell responsiveness to BMPs. Up-regulates BMPR1A expression in the mammary mesenchyme and this increases the sensitivity of these cells to BMPs and allows them to respond to BMP4 in a paracrine and/or autocrine fashion. BMP4 signaling in the mesenchyme, in turn, triggers epithelial outgrowth and augments MSX2 expression, which causes the mammary mesenchyme to inhibit hair follicle formation within the nipple sheath. In terms of biological role, potent inhibitor of osteoclastic bone resorption. The protein is Parathyroid hormone-related protein (PTHLH) of Bos taurus (Bovine).